The primary structure comprises 442 residues: MSEMTPREIVHELDAHIIGQQKAKRSVAVALRNRWRRMQLDVDFRQEVTPKNILMIGPTGVGKTEIARRLAKLANAPFIKVEATKYTEVGYVGKEVEQIIRDLTDIAIKLTREQQMGKCRQRAEENAEERILDALLPKPKNDWESTETDSSSNTRQVFRKKLREGQLDDKEIDIDVAQPQVGVEIMSPPGMEEMTNQLQSLFKNMGQAPAKRRKMKIKEAFKLLIEEEAAKLVNQEDLKEQAIEMVEQHGIVFLDEIDKICKRGETSGPDVSREGVQRDLLPLIEGCTVTTKHGMVKTDHILFIASGAFQMSKPSDLIPELQGRLPIRVELDALSANDFKRILTEPHASLTEQYIALMNTEGVKVEFSESGIDSIAKAAWQVNERTENIGARRLHTVMEKLMEDISYEASEKSGSAFVIDADYVSAHLDNLVQDEDLSRFIL.

ATP-binding positions include Ile18 and 60–65 (GVGKTE). The interval 137-156 (PKPKNDWESTETDSSSNTRQ) is disordered. Residues Asp255, Glu320, and Arg392 each contribute to the ATP site.

The protein belongs to the ClpX chaperone family. HslU subfamily. In terms of assembly, a double ring-shaped homohexamer of HslV is capped on each side by a ring-shaped HslU homohexamer. The assembly of the HslU/HslV complex is dependent on binding of ATP.

It localises to the cytoplasm. Functionally, ATPase subunit of a proteasome-like degradation complex; this subunit has chaperone activity. The binding of ATP and its subsequent hydrolysis by HslU are essential for unfolding of protein substrates subsequently hydrolyzed by HslV. HslU recognizes the N-terminal part of its protein substrates and unfolds these before they are guided to HslV for hydrolysis. The chain is ATP-dependent protease ATPase subunit HslU from Shewanella baltica (strain OS155 / ATCC BAA-1091).